Reading from the N-terminus, the 420-residue chain is 3-oxoacyl-[acyl-carrier-protein] synthase 2 (420 aa).

One can recognise a Ketosynthase family 3 (KS3) domain in the interval 13 to 419; that stretch reads FPNVVVTGIA…GHNVAIAFGC (407 aa). Catalysis depends on for beta-ketoacyl synthase activity residues Cys173, His314, and His349.

The protein belongs to the thiolase-like superfamily. Beta-ketoacyl-ACP synthases family.

Its subcellular location is the cytoplasm. The enzyme catalyses an ultra-long-chain di-unsaturated fatty acyl-[ACP] + malonyl-[ACP] + H(+) = a 3-oxo-ultra-long-chain di-unsaturated fatty acyl-[ACP] + holo-[ACP] + CO2. The protein operates within lipid metabolism; mycolic acid biosynthesis. In terms of biological role, part of the mycobacterial fatty acid elongation system FAS-II, which is involved in mycolic acid biosynthesis. Catalyzes the elongation of long chain acyl-ACP substrates by the addition of two carbons from malonyl-ACP to an acyl acceptor. Involved in extension of the mycolate chains to full lengths and produces longer chain multiunsaturated hydrocarbons averaging 54 carbons in length. The sequence is that of 3-oxoacyl-[acyl-carrier-protein] synthase 2 (kasB) from Mycobacterium leprae (strain TN).